The chain runs to 819 residues: Cadherin-24 (819 aa).

The N-terminal stretch at 1 to 19 (MWGLVRLLLAWLGGWGCMG) is a signal peptide. The propeptide occupies 21–44 (LAAPARAWAGSREHPGPALLRTRR). Topologically, residues 45 to 641 (SWVWNQFFVI…LSAAGLSTGA (597 aa)) are extracellular. 5 consecutive Cadherin domains span residues 46–150 (WVWN…PPIF), 151–259 (PLGP…PPKF), 260–374 (PQSL…PPAF), 375–517 (TQAA…APQL), and 517–630 (LAEP…WPEA). N-linked (GlcNAc...) asparagine glycans are attached at residues Asn446, Asn548, and Asn563. Residues 642-662 (LLAIITCVGALLALVVLFVAL) traverse the membrane as a helical segment. The Cytoplasmic segment spans residues 663–819 (RRQKQEALMV…LYGAKEPPAP (157 aa)). Residues 768–800 (YEGRGSSCGSLSSLGSGSEAGGAPGPAEPLDDW) are disordered. The span at 771–784 (RGSSCGSLSSLGSG) shows a compositional bias: low complexity.

In terms of assembly, associates with alpha-, beta- and delta-catenins.

It localises to the cell membrane. Functionally, cadherins are calcium-dependent cell adhesion proteins. They preferentially interact with themselves in a homophilic manner in connecting cells; cadherins may thus contribute to the sorting of heterogeneous cell types. Cadherin-24 mediate strong cell-cell adhesion. This Homo sapiens (Human) protein is Cadherin-24 (CDH24).